We begin with the raw amino-acid sequence, 2904 residues long: Highly reducing polyketide synthase bet1 (2904 aa).

A Ketosynthase family 3 (KS3) domain is found at 8–441 (NEPIAIVGSG…GTNAHAIVES (434 aa)). Residues Cys181, His320, and His361 each act as for beta-ketoacyl synthase activity in the active site. An acyl transferase (AT) domain region spans residues 553-875 (VFTGQGAQYA…PYHGTLLRGG (323 aa)). Positions 948-1081 (HQLLGDVSPD…GELKVVLVDE (134 aa)) are N-terminal hotdog fold. In terms of domain architecture, PKS/mFAS DH spans 948 to 1257 (HQLLGDVSPD…FKPVGSDASN (310 aa)). Residues 971–1255 (PREMTWLEGH…VKFKPVGSDA (285 aa)) are dehydratase (DH) domain. The active-site Proton acceptor; for dehydratase activity is His980. Residues 1098 to 1257 (MIPVQPSRLY…FKPVGSDASN (160 aa)) are C-terminal hotdog fold. Residue Asp1159 is the Proton donor; for dehydratase activity of the active site. A methyltransferase (cMeT) domain region spans residues 1411–1596 (KQSTLWVASI…GFSGIDTMSP (186 aa)). The tract at residues 2125–2298 (TYWLVGLSGA…RSSVVNVGAI (174 aa)) is ketoreductase (KR)domain. The 80-residue stretch at 2407–2486 (EVANVIKQAY…SLVELAAESI (80 aa)) folds into the Carrier domain. An O-(pantetheine 4'-phosphoryl)serine modification is found at Ser2445. A disordered region spans residues 2492–2543 (PGVPQANANPNGPSSPDSDATESSNQNSDVDVTSTRATSPSTPAATSPDSNV). A compositionally biased stretch (polar residues) spans 2497 to 2523 (ANANPNGPSSPDSDATESSNQNSDVDV). Low complexity predominate over residues 2524-2541 (TSTRATSPSTPAATSPDS). The reductase (R) domain stretch occupies residues 2585–2817 (LTGCSGLLGH…DLVSVETCCE (233 aa)).

Pantetheine 4'-phosphate is required as a cofactor.

It carries out the reaction 7 malonyl-CoA + acetyl-CoA + 10 AH2 + 5 S-adenosyl-L-methionine + 2 H(+) = dehydroprobetaenone I + 10 A + 5 S-adenosyl-L-homocysteine + 7 CO2 + 8 CoA + 6 H2O. Its pathway is mycotoxin biosynthesis. Functionally, highly reducing polyketide synthase; part of the gene cluster that mediates the biosynthesis of betaenones, phytotoxic polyketides involved in leaf spot disease in sugar beets. The first step of the pathway is the synthesis of dehydroprobetaenone I by the polyketide synthase bet1 and the enoyl reductase bet3 via condensation of one acetyl-CoA starter unit with 7 malonyl-CoA units and 5 methylations. The C-terminal reductase (R) domain of bet1 catalyzes the reductive release of the polyketide chain. Because bet1 lacks a designated enoylreductase (ER) domain, the required activity is provided the enoyl reductase bet3. The short-chain dehydrogenase/reductase bet4 then catalyzes reduction of dehydroprobetaenone I to probetaenone I. The cytochrome P450 monooxygenase bet2 catalyzes successive epoxidation, oxidation (resulting from epoxide opening) and hydroxylation to install a tertiary alcohol in the decaline ring to yield betaenone C from dehydroprobetaenone I and betaenone B from probetaenone I. The FAD-linked oxidoreductase (orf1) is probably responsible for the conversion of betaenone C to betaenone A via an intramolecular aldol reaction between C-1 and C-17 to form the bridged tricyclic system in betaenone A. In Neocamarosporium betae (Beet black rot fungus), this protein is Highly reducing polyketide synthase bet1.